We begin with the raw amino-acid sequence, 146 residues long: Large ribosomal subunit protein uL15 (146 aa).

Residues 1–13 show a composition bias toward basic and acidic residues; the sequence is MKLHELKPAEGSR. Residues 1-57 form a disordered region; the sequence is MKLHELKPAEGSRKVRNRVGRGTSSGNGKTSGRGQKGQKARSGVGLRPGFEGGQTPL. Residues 23–35 are compositionally biased toward gly residues; the sequence is TSSGNGKTSGRGQ.

It belongs to the universal ribosomal protein uL15 family. As to quaternary structure, part of the 50S ribosomal subunit.

Binds to the 23S rRNA. The sequence is that of Large ribosomal subunit protein uL15 from Streptococcus thermophilus (strain CNRZ 1066).